The following is a 284-amino-acid chain: Pantothenate synthetase (284 aa).

30-37 (MGFLHEGH) provides a ligand contact to ATP. The active-site Proton donor is histidine 37. Residue glutamine 61 participates in (R)-pantoate binding. A beta-alanine-binding site is contributed by glutamine 61. 147-150 (GRKD) provides a ligand contact to ATP. Glutamine 153 contributes to the (R)-pantoate binding site. ATP contacts are provided by residues valine 176 and 184 to 187 (MSSR).

Belongs to the pantothenate synthetase family. As to quaternary structure, homodimer.

Its subcellular location is the cytoplasm. It carries out the reaction (R)-pantoate + beta-alanine + ATP = (R)-pantothenate + AMP + diphosphate + H(+). Its pathway is cofactor biosynthesis; (R)-pantothenate biosynthesis; (R)-pantothenate from (R)-pantoate and beta-alanine: step 1/1. Catalyzes the condensation of pantoate with beta-alanine in an ATP-dependent reaction via a pantoyl-adenylate intermediate. This Pelobacter propionicus (strain DSM 2379 / NBRC 103807 / OttBd1) protein is Pantothenate synthetase.